Reading from the N-terminus, the 180-residue chain is ATP-dependent protease subunit HslV (180 aa).

The active site involves Thr-5. The Na(+) site is built by Gly-161, Cys-164, and Thr-167.

This sequence belongs to the peptidase T1B family. HslV subfamily. As to quaternary structure, a double ring-shaped homohexamer of HslV is capped on each side by a ring-shaped HslU homohexamer. The assembly of the HslU/HslV complex is dependent on binding of ATP.

Its subcellular location is the cytoplasm. The enzyme catalyses ATP-dependent cleavage of peptide bonds with broad specificity.. Its activity is regulated as follows. Allosterically activated by HslU binding. In terms of biological role, protease subunit of a proteasome-like degradation complex believed to be a general protein degrading machinery. This chain is ATP-dependent protease subunit HslV, found in Campylobacter fetus subsp. fetus (strain 82-40).